We begin with the raw amino-acid sequence, 421 residues long: Serine hydroxymethyltransferase (421 aa).

Residues Leu-121 and 125 to 127 (GHL) contribute to the (6S)-5,6,7,8-tetrahydrofolate site. The residue at position 230 (Lys-230) is an N6-(pyridoxal phosphate)lysine. (6S)-5,6,7,8-tetrahydrofolate is bound at residue 355 to 357 (SPF).

Belongs to the SHMT family. As to quaternary structure, homodimer. It depends on pyridoxal 5'-phosphate as a cofactor.

It is found in the cytoplasm. The catalysed reaction is (6R)-5,10-methylene-5,6,7,8-tetrahydrofolate + glycine + H2O = (6S)-5,6,7,8-tetrahydrofolate + L-serine. Its pathway is one-carbon metabolism; tetrahydrofolate interconversion. The protein operates within amino-acid biosynthesis; glycine biosynthesis; glycine from L-serine: step 1/1. Its function is as follows. Catalyzes the reversible interconversion of serine and glycine with tetrahydrofolate (THF) serving as the one-carbon carrier. This reaction serves as the major source of one-carbon groups required for the biosynthesis of purines, thymidylate, methionine, and other important biomolecules. Also exhibits THF-independent aldolase activity toward beta-hydroxyamino acids, producing glycine and aldehydes, via a retro-aldol mechanism. The sequence is that of Serine hydroxymethyltransferase from Psychromonas ingrahamii (strain DSM 17664 / CCUG 51855 / 37).